The primary structure comprises 335 residues: Glucose-dependent insulinotropic receptor (335 aa).

Residues 1–12 (MESSFSFGVILA) lie on the Extracellular side of the membrane. The helical transmembrane segment at 13-33 (VLASLIIATNTLVAVAVLLLI) threads the bilayer. The Cytoplasmic portion of the chain corresponds to 34 to 37 (HKND). A helical transmembrane segment spans residues 38 to 58 (GVSLCFTLNLAVADTLIGVAI). The Extracellular segment spans residues 59–81 (SGLLTDQLSSPSRPTQKTLCSLR). Residues 82–102 (MAFVTSSAAASVLTVMLITFD) traverse the membrane as a helical segment. Residues 103–125 (RYLAIKQPFRYLKIMSGFVAGAC) are Cytoplasmic-facing. The chain crosses the membrane as a helical span at residues 126 to 146 (IAGLWLVSYLIGFLPLGIPMF). The Extracellular portion of the chain corresponds to 147–164 (QQTAYKGQCSFFAVFHPH). The chain crosses the membrane as a helical span at residues 165-185 (FVLTLSCVGFFPAMLLFVFFY). At 186-226 (CDMLKIASMHSQQIRKMEHAGAMAGGYRSPRTPSDFKALRT) the chain is on the cytoplasmic side. Residues 227–247 (VSVLIGSFALSWTPFLITGIV) form a helical membrane-spanning segment. Over 248–262 (QVACQECHLYLVLER) the chain is Extracellular. Residues 263 to 283 (YLWLLGVGNSLLNPLIYAYWQ) traverse the membrane as a helical segment. Over 284 to 335 (KEVRLQLYHMALGVKKVLTSFLLFLSARNCGPERPRESSCHIVTISSSEFDG) the chain is Cytoplasmic.

This sequence belongs to the G-protein coupled receptor 1 family. Predominantly expressed in the pancreas, especially in the islets.

The protein localises to the cell membrane. Functionally, receptor for the endogenous fatty-acid ethanolamide oleoylethanolamide (OEA) and lysophosphatidylcholine (LPC). Functions as a glucose-dependent insulinotropic receptor. The activity of this receptor is mediated by G proteins which activate adenylate cyclase. Seems to act through a G(s) mediated pathway. The polypeptide is Glucose-dependent insulinotropic receptor (GPR119) (Homo sapiens (Human)).